Here is a 259-residue protein sequence, read N- to C-terminus: uncharacterized protein (259 aa).

The signal sequence occupies residues 1–22 (MKHSKKLLLCISFLLITFFISG). Cys23 carries N-palmitoyl cysteine lipidation. Cys23 is lipidated: S-diacylglycerol cysteine.

Belongs to the staphylococcal tandem lipoprotein family.

It localises to the cell membrane. This is an uncharacterized protein from Staphylococcus epidermidis (strain ATCC 35984 / DSM 28319 / BCRC 17069 / CCUG 31568 / BM 3577 / RP62A).